The chain runs to 425 residues: Serine--tRNA ligase 2 (425 aa).

230-232 (TAE) serves as a coordination point for L-serine. Residue 261–263 (REE) participates in ATP binding. L-serine is bound at residue E284. 348–351 (EISS) provides a ligand contact to ATP. Residue S383 participates in L-serine binding.

It belongs to the class-II aminoacyl-tRNA synthetase family. Type-1 seryl-tRNA synthetase subfamily. Homodimer. The tRNA molecule binds across the dimer.

It localises to the cytoplasm. It carries out the reaction tRNA(Ser) + L-serine + ATP = L-seryl-tRNA(Ser) + AMP + diphosphate + H(+). It catalyses the reaction tRNA(Sec) + L-serine + ATP = L-seryl-tRNA(Sec) + AMP + diphosphate + H(+). It participates in aminoacyl-tRNA biosynthesis; selenocysteinyl-tRNA(Sec) biosynthesis; L-seryl-tRNA(Sec) from L-serine and tRNA(Sec): step 1/1. Its function is as follows. Catalyzes the attachment of serine to tRNA(Ser). Is also able to aminoacylate tRNA(Sec) with serine, to form the misacylated tRNA L-seryl-tRNA(Sec), which will be further converted into selenocysteinyl-tRNA(Sec). This is Serine--tRNA ligase 2 from Lactiplantibacillus plantarum (strain ATCC BAA-793 / NCIMB 8826 / WCFS1) (Lactobacillus plantarum).